The chain runs to 529 residues: L-ornithine N(5)-monooxygenase (529 aa).

FAD contacts are provided by residues 100 to 108 (EKQPQFAWH) and Gln-119. Lys-124 is a binding site for substrate. Val-185 lines the FAD pocket. NADP(+) is bound at residue 270-273 (NGQS). Substrate-binding positions include 309 to 312 (NEIF) and Asn-339. 339 to 341 (NYG) provides a ligand contact to NADP(+). 493-495 (TLL) contacts FAD. Ser-496 lines the substrate pocket.

Belongs to the lysine N(6)-hydroxylase/L-ornithine N(5)-oxygenase family. Homotetramer. FAD serves as cofactor.

The enzyme catalyses L-ornithine + NADPH + O2 = N(5)-hydroxy-L-ornithine + NADP(+) + H2O. The catalysed reaction is L-ornithine + NADH + O2 = N(5)-hydroxy-L-ornithine + NAD(+) + H2O. It participates in siderophore biosynthesis. Functionally, L-ornithine N(5)-monooxygenase; part of the gene cluster that mediates the biosynthesis of hydroxamate-containing siderophores that play a critical role in virulence. Cochliobolus heterostrophus produces extracellular coprogen-type siderophores including coprogen, neocoprogen I and neocoprogen II, as well as the intracellular siderophore ferricrocin. The role of extracellular siderophores is to supply iron to their producers in planta and the intracellular ferricrocin is required for intracellular iron distribution and storage with a crucial role in ascus and ascospore development. SIDA2 catalyzes the conversion of L-ornithine to N(5)-hydroxyornithine, the first step in the biosynthesis of all hydroxamate-containing siderophores. The assembly of extracellular coprogen-type siderophores is then performed by the nonribosomal peptide synthetase (NRPS) NPS6 whereas the intracellular siderophore ferricrocin is assembled by NPS2. The protein is L-ornithine N(5)-monooxygenase of Cochliobolus heterostrophus (strain C4 / ATCC 48331 / race T) (Southern corn leaf blight fungus).